A 163-amino-acid polypeptide reads, in one-letter code: Mating-type protein ALPHA2 (163 aa).

The homeobox; TALE-type DNA-binding region spans 80-142 (IEKRSKRFPK…NRRRKERTLT (63 aa)).

This sequence belongs to the TALE/M-ATYP homeobox family.

The protein resides in the nucleus. Its function is as follows. Mating type proteins are sequence specific DNA-binding proteins that act as master switches in yeast differentiation by controlling gene expression in a cell type-specific fashion. This is Mating-type protein ALPHA2 (MATALPHA2) from Pichia angusta (Yeast).